The primary structure comprises 241 residues: Fatty acid metabolism regulator protein (241 aa).

Residues 11-79 enclose the HTH gntR-type domain; sequence QSPAALAEEY…HGKPTKVNNI (69 aa). A DNA-binding region (H-T-H motif) is located at residues 39–58; the sequence is ERDLADKIGVTRTTLREVLQ.

In terms of assembly, homodimer.

The protein resides in the cytoplasm. In terms of biological role, multifunctional regulator of fatty acid metabolism. This is Fatty acid metabolism regulator protein from Haemophilus influenzae (strain ATCC 51907 / DSM 11121 / KW20 / Rd).